The primary structure comprises 794 residues: Striatin-3 (794 aa).

Position 1 is an N-acetylmethionine (methionine 1). Gly residues predominate over residues methionine 1–glycine 12. Residues methionine 1–proline 59 are disordered. The interval tyrosine 70 to phenylalanine 78 is caveolin-binding. Residues alanine 76 to lysine 135 adopt a coiled-coil conformation. Threonine 149 bears the Phosphothreonine mark. Residues glutamine 164–leucine 181 are calmodulin-binding. Phosphoserine occurs at positions 200, 212, 227, 255, and 332. The interval glutamate 309–aspartate 339 is disordered. WD repeat units lie at residues serine 475–lysine 514, alanine 528–tyrosine 567, alanine 581–cysteine 620, glutamine 676–serine 715, alanine 718–glutamate 757, and lysine 764–valine 794.

This sequence belongs to the WD repeat striatin family. In terms of assembly, tetramerizes. Part of the core of STRIPAK complexes composed of PP2A catalytic and scaffolding subunits, the striatins (PP2A regulatory subunits), the striatin-associated proteins MOB4, STRIP1 and STRIP2, PDCD10 and members of the STE20 kinases, such as STK24 and STK26. The STRIPAK complex can be extended by adapter proteins such as SLMAP:SIKE1 or CTTNBP2NL. Interacts with CDC42BPB.

It localises to the cytoplasm. Its subcellular location is the membrane. In terms of biological role, calmodulin-binding scaffolding protein which is the center of the striatin-interacting phosphatase and kinase (STRIPAK) complexes. STRIPAK complexes have critical roles in protein (de)phosphorylation and are regulators of multiple signaling pathways including Hippo, MAPK, nuclear receptor and cytoskeleton remodeling. Different types of STRIPAK complexes are involved in a variety of biological processes such as cell growth, differentiation, apoptosis, metabolism and immune regulation. This Rattus norvegicus (Rat) protein is Striatin-3 (Strn3).